The sequence spans 405 residues: Secreted aspartic protease 8 (405 aa).

The N-terminal stretch at 1–23 (MVSIITFTKNVLVTLAFALLAQG) is a signal peptide. Residues 24–75 (LAIPEDIDKRAEKVVSLDFTVTRKPFNATAHGQHHQSQQQQQQQQQQPAQKR) constitute a propeptide, activation peptide. Residues 52–78 (TAHGQHHQSQQQQQQQQQQPAQKRGTV) are disordered. A compositionally biased stretch (low complexity) spans 58–70 (HQSQQQQQQQQQQ). The Peptidase A1 domain maps to 89-392 (YAATITVGSN…DLDGNTISLA (304 aa)). The active site involves D107. 107–109 (DTG) contacts pepstatin A. A disulfide bond links C122 and C134. Residues 160 to 161 (ED) and 292 to 296 (DSGTT) contribute to the pepstatin A site. D292 is a catalytic residue. A disulfide bridge connects residues C327 and C358.

This sequence belongs to the peptidase A1 family. In terms of assembly, monomer.

The protein resides in the secreted. It catalyses the reaction Preferential cleavage at the carboxyl of hydrophobic amino acids, but fails to cleave 15-Leu-|-Tyr-16, 16-Tyr-|-Leu-17 and 24-Phe-|-Phe-25 of insulin B chain. Activates trypsinogen, and degrades keratin.. Its function is as follows. Secreted aspartic peptidases (SAPs) are a group of ten acidic hydrolases considered as key virulence factors. These enzymes supply the fungus with nutrient amino acids as well as are able to degrade the selected host's proteins involved in the immune defense. Moreover, acts toward human hemoglobin though limited proteolysis to generate a variety of antimicrobial hemocidins, enabling to compete with the other microorganisms of the same physiological niche using the microbicidal peptides generated from the host protein. In terms of biological role, plays a key role in defense against host by cleaving histatin-5 (Hst 5), a peptide from human saliva that carries out fungicidal activity. The cleavage rate decreases in an order of SAP2 &gt; SAP9 &gt; SAP3 &gt; SAP7 &gt; SAP4 &gt; SAP1 &gt; SAP8. The hydrolysis of Hst 5 by SAP8 causes production of the DSHAKRHHGY, HHSHRGY and FHEKHHSHRGY peptides. The chain is Secreted aspartic protease 8 from Candida albicans (strain SC5314 / ATCC MYA-2876) (Yeast).